A 115-amino-acid polypeptide reads, in one-letter code: Con-Ins T1A (115 aa).

A signal peptide spans 1 to 24; it reads MTTSFYFLLMALGLLLYVCQSSFG. Positions 25–29 are excised as a propeptide; the sequence is NQHTR. Pro34 bears the 4-hydroxyproline; partial mark. 3 cysteine pairs are disulfide-bonded: Cys38-Cys101, Cys50-Cys114, and Cys100-Cys105. Position 41 is a 4-carboxyglutamate (Glu41). A propeptide spans 53 to 94 (c peptide); that stretch reads KRNDAGKKRGRASPLWQRGGSLSMLKARAKRNEAFHLQRAHR. A 4-carboxyglutamate modification is found at Glu98. At Pro104 the chain carries 4-hydroxyproline; partial. Glu109 is subject to 4-carboxyglutamate; partial. Cys114 bears the Cysteine amide mark.

Belongs to the insulin family. Heterodimer of A and B chains; disulfide-linked. Expressed by the venom gland.

It is found in the secreted. Its function is as follows. This venom insulin, from a fish-hunting cone snail, facilitates prey capture by rapidly inducing hypoglycemic shock. It is one of the smallest known insulin found in nature and lacks the C-terminal segment of the B chain that, in human insulin, mediates engagement of the insulin receptor (INSR) and assembly of the hormone's hexameric storage form. Despite lacking this segment, it both binds and activates human insulin receptor (long isoform (HIR-B)) with a high potency (EC(50)=12.0 nM). In vivo, intraperitoneal injection of this peptide into zebrafish lowers blood glucose with a lower potency than human insulin. In addition, when applied to water, this peptide reduces overall locomotor activity of zebrafish larvae, observed as a significant decrease in the percentage of time spent swimming and movement frequency. When tested on a mouse model of diabetes, this insulin also lowers blood glucose with a 10-fold lower potency than human insulin. The protein is Con-Ins T1A of Conus tulipa (Fish-hunting cone snail).